Here is a 373-residue protein sequence, read N- to C-terminus: Cytoplasmic tRNA 2-thiolation protein 1 (373 aa).

The protein belongs to the TtcA family. CTU1/NCS6/ATPBD3 subfamily.

The protein localises to the cytoplasm. It functions in the pathway tRNA modification; 5-methoxycarbonylmethyl-2-thiouridine-tRNA biosynthesis. Its function is as follows. Plays a central role in 2-thiolation of mcm(5)S(2)U at tRNA wobble positions of tRNA(Lys), tRNA(Glu) and tRNA(Gln). Directly binds tRNAs and probably acts by catalyzing adenylation of tRNAs, an intermediate required for 2-thiolation. It is unclear whether it acts as a sulfurtransferase that transfers sulfur from thiocarboxylated URM1 onto the uridine of tRNAs at wobble position. Prior mcm(5) tRNA modification by the elongator complex is required for 2-thiolation. May also be involved in protein urmylation. The chain is Cytoplasmic tRNA 2-thiolation protein 1 from Malassezia globosa (strain ATCC MYA-4612 / CBS 7966) (Dandruff-associated fungus).